A 722-amino-acid chain; its full sequence is MFNIHSVEIDWGGRPLKLETGKVARQADGAVVATYGETVVLATVVAAKSPREGVDFLPLTVDYQEKAYAAGRIPGGYFKREGRPTEKETLVSRLIDRPIRPLFADGWRNETQVIVTVLSHDMENDPDVLAMVAASAALTLSGVPFKGPIGAARVGFINDEYVLNPVLDEMAETQLELVVAGTADAVLMVESEAKELSEEIMLGAVMFGHRHFQPVIDAIIDLAEKAAKEPRELTVVDDSEIEKEMLGLVEQELRAAYAIPVKQDRYAAVGKVKEKAIAHFFPEGQEPKYDKLRIAGVFKELEAKIVRWNILDTGKRIDGRDSKTVRNILAQVGVLPRTHGSALFTRGETQALVVTTLGTGEDEQYVDSLSGTYKETFLLHYNFPPYSVGETGRLGGTKRREIGHGKLAWRAIHPVLPPHHEFPYTIRVVSEITESNGSSSMASVCGASLALMDAGVPLKRPTAGIAMGLILEGERFAVLSDILGDEDHLGDMDFKVAGTEQGITSLQMDIKIAGITEEIMKVALGQAKDGRIHILGEMSKALDRARAELGEHAPRIETFKIPTDKIREVIGTGGKVIREIVEKTGAKVNIEDDGTVKVASSDGESIKAAIKWIKSIASDPEIGEIYEGTVVKVMEFGAFVNFFGAKDGLVHISQLAAGRVQKTSDVVKEGDKVKVKLLGFDDRGKTRLSMKVVDQTTGEDLEAKQKAEAKAEGEAPAQAAGE.

Positions 487 and 493 each coordinate Mg(2+). A KH domain is found at Pro554 to Ile613. Residues Gly623–Lys691 form the S1 motif domain. Residues Thr697–Glu722 are disordered. A compositionally biased stretch (basic and acidic residues) spans Leu701–Gly713.

The protein belongs to the polyribonucleotide nucleotidyltransferase family. The cofactor is Mg(2+).

It is found in the cytoplasm. The enzyme catalyses RNA(n+1) + phosphate = RNA(n) + a ribonucleoside 5'-diphosphate. Its function is as follows. Involved in mRNA degradation. Catalyzes the phosphorolysis of single-stranded polyribonucleotides processively in the 3'- to 5'-direction. This chain is Polyribonucleotide nucleotidyltransferase, found in Rhodopseudomonas palustris (strain TIE-1).